A 423-amino-acid polypeptide reads, in one-letter code: Tegument protein UL43 (423 aa).

Positions 1 to 12 (MEKTPAETTAVS) are enriched in polar residues. The segment at 1–46 (MEKTPAETTAVSAGNVPRDSIPCITNVSADTRGRTRPSRPATVPQR) is disordered.

The protein belongs to the herpesviridae US22 family.

Its subcellular location is the virion tegument. This Homo sapiens (Human) protein is Tegument protein UL43 (UL43).